The chain runs to 409 residues: Z-DNA-binding protein 1 (409 aa).

2 Z-binding domains span residues 8–70 (LGTG…SLGG) and 85–147 (SAAQ…TIYR). Residues K17 and K43 each participate in a glycyl lysine isopeptide (Lys-Gly) (interchain with G-Cter in ubiquitin) cross-link. Residues 59–87 (SSPAPATWSLGGDGASGDGAPEIPEDSAA) are disordered. Short sequence motifs (RIP homotypic interaction motif (RHIM)) lie at residues 183 to 207 (NSLI…RQTI) and 241 to 265 (LIHL…LERD). 2 disordered regions span residues 269 to 307 (HPIF…GGTT) and 323 to 369 (GNNN…TPSD). A compositionally biased stretch (low complexity) spans 270–290 (PIFSFSSSPPESTTTADPETA). Residues 337 to 351 (GTKESADSQELKEDT) show a composition bias toward basic and acidic residues.

Homodimer. Interacts (via RIP homotypic interaction motif) with RIPK3; leading to RIPK3 activation and necroptosis; interaction is enhanced by CASP6. Interacts (via RIP homotypic interaction motif) with RIPK1. Component of the AIM2 PANoptosome complex, a multiprotein complex that drives inflammatory cell death (PANoptosis). In terms of processing, ubiquitinated; polyubiquitinated following influenza A virus (IAV) infection. Post-translationally, phosphorylated.

It localises to the cytoplasm. Its subcellular location is the nucleus. With respect to regulation, ZBP1-dependent necroptosis is normally inhibited by RIPK1: RIPK1 inhibits the ZBP1-induced activation of RIPK3 via FADD-mediated recruitment of CASP8, which cleaves RIPK1 and limits TNF-induced necroptosis. Key innate sensor that recognizes and binds Z-RNA structures, which are produced by a number of viruses, such as herpesvirus, orthomyxovirus or flavivirus, and triggers different forms of cell death. ZBP1 acts as an essential mediator of pyroptosis, necroptosis and apoptosis (PANoptosis), an integral part of host defense against pathogens, by activating RIPK3, caspase-8 (CASP8), and the NLRP3 inflammasome. Key activator of necroptosis, a programmed cell death process in response to death-inducing TNF-alpha family members, via its ability to bind Z-RNA: once activated upon Z-RNA-binding, ZBP1 interacts and stimulates RIPK3 kinase, which phosphorylates and activates MLKL, triggering execution of programmed necrosis. In addition to TNF-induced necroptosis, necroptosis can also take place in the nucleus in response to orthomyxoviruses infection: ZBP1 recognizes and binds Z-RNA structures that are produced in infected nuclei by orthomyxoviruses, such as the influenza A virus (IAV), leading to ZBP1 activation, RIPK3 stimulation and subsequent MLKL phosphorylation, triggering disruption of the nuclear envelope and leakage of cellular DNA into the cytosol. ZBP1-dependent cell death in response to IAV infection promotes interleukin-1 alpha (IL1A) induction in an NLRP3-inflammasome-independent manner: IL1A expression is required for the optimal interleukin-1 beta (IL1B) production, and together, these cytokines promote infiltration of inflammatory neutrophils to the lung, leading to the formation of neutrophil extracellular traps. In addition to its direct role in driving necroptosis via its ability to sense Z-RNAs, also involved in PANoptosis triggered in response to bacterial infection: component of the AIM2 PANoptosome complex, a multiprotein complex that triggers PANoptosis. Also acts as the apical sensor of fungal infection responsible for activating PANoptosis. Involved in CASP8-mediated cell death via its interaction with RIPK1 but independently of its ability to sense Z-RNAs. In some cell types, also able to restrict viral replication by promoting cell death-independent responses. In response to flavivirus infection in neurons, promotes a cell death-independent pathway that restricts viral replication: together with RIPK3, promotes a death-independent transcriptional program that modifies the cellular metabolism via up-regulation expression of the enzyme ACOD1/IRG1 and production of the metabolite itaconate. Itaconate inhibits the activity of succinate dehydrogenase, generating a metabolic state in neurons that suppresses replication of viral genomes. The chain is Z-DNA-binding protein 1 from Rattus norvegicus (Rat).